The following is a 261-amino-acid chain: MAHQAHAYHMVDPSPWPLTGAIAALLMTSGLAIWFHFHSTTLMTLGLILLLLTMYQWWRDIIREGTFQGHHTPPVQKGLRYGMILFITSEVFFFLGFFWAFYHSSLAPTPELGGCWPPTGITPLDPFEVPLLNTAVLLASGVTVTWAHHSIMEGERKQAIQSLALTILLGFYFTALQAMEYYEAPFTIADGVYGSTFFVATGFHGLHVIIGSTFLAVCLLRQIQYHFTSEHHFGFEAAAWYWHFVDVVWLFLYVSIYWWGS.

At 1 to 15 (MAHQAHAYHMVDPSP) the chain is on the mitochondrial matrix side. The chain crosses the membrane as a helical span at residues 16–34 (WPLTGAIAALLMTSGLAIW). The Mitochondrial intermembrane segment spans residues 35–40 (FHFHST). The chain crosses the membrane as a helical span at residues 41–66 (TLMTLGLILLLLTMYQWWRDIIREGT). Residues 67 to 72 (FQGHHT) lie on the Mitochondrial matrix side of the membrane. The helical transmembrane segment at 73–105 (PPVQKGLRYGMILFITSEVFFFLGFFWAFYHSS) threads the bilayer. The Mitochondrial intermembrane segment spans residues 106–128 (LAPTPELGGCWPPTGITPLDPFE). Residues 129-152 (VPLLNTAVLLASGVTVTWAHHSIM) traverse the membrane as a helical segment. Residues 153 to 155 (EGE) lie on the Mitochondrial matrix side of the membrane. Residues 156–183 (RKQAIQSLALTILLGFYFTALQAMEYYE) traverse the membrane as a helical segment. Over 184 to 190 (APFTIAD) the chain is Mitochondrial intermembrane. A helical membrane pass occupies residues 191–223 (GVYGSTFFVATGFHGLHVIIGSTFLAVCLLRQI). The Mitochondrial matrix portion of the chain corresponds to 224–232 (QYHFTSEHH). The chain crosses the membrane as a helical span at residues 233-256 (FGFEAAAWYWHFVDVVWLFLYVSI). Over 257-261 (YWWGS) the chain is Mitochondrial intermembrane.

The protein belongs to the cytochrome c oxidase subunit 3 family. As to quaternary structure, component of the cytochrome c oxidase (complex IV, CIV), a multisubunit enzyme composed of 14 subunits. The complex is composed of a catalytic core of 3 subunits MT-CO1, MT-CO2 and MT-CO3, encoded in the mitochondrial DNA, and 11 supernumerary subunits COX4I, COX5A, COX5B, COX6A, COX6B, COX6C, COX7A, COX7B, COX7C, COX8 and NDUFA4, which are encoded in the nuclear genome. The complex exists as a monomer or a dimer and forms supercomplexes (SCs) in the inner mitochondrial membrane with NADH-ubiquinone oxidoreductase (complex I, CI) and ubiquinol-cytochrome c oxidoreductase (cytochrome b-c1 complex, complex III, CIII), resulting in different assemblies (supercomplex SCI(1)III(2)IV(1) and megacomplex MCI(2)III(2)IV(2)).

It localises to the mitochondrion inner membrane. The enzyme catalyses 4 Fe(II)-[cytochrome c] + O2 + 8 H(+)(in) = 4 Fe(III)-[cytochrome c] + 2 H2O + 4 H(+)(out). Its function is as follows. Component of the cytochrome c oxidase, the last enzyme in the mitochondrial electron transport chain which drives oxidative phosphorylation. The respiratory chain contains 3 multisubunit complexes succinate dehydrogenase (complex II, CII), ubiquinol-cytochrome c oxidoreductase (cytochrome b-c1 complex, complex III, CIII) and cytochrome c oxidase (complex IV, CIV), that cooperate to transfer electrons derived from NADH and succinate to molecular oxygen, creating an electrochemical gradient over the inner membrane that drives transmembrane transport and the ATP synthase. Cytochrome c oxidase is the component of the respiratory chain that catalyzes the reduction of oxygen to water. Electrons originating from reduced cytochrome c in the intermembrane space (IMS) are transferred via the dinuclear copper A center (CU(A)) of subunit 2 and heme A of subunit 1 to the active site in subunit 1, a binuclear center (BNC) formed by heme A3 and copper B (CU(B)). The BNC reduces molecular oxygen to 2 water molecules using 4 electrons from cytochrome c in the IMS and 4 protons from the mitochondrial matrix. The chain is Cytochrome c oxidase subunit 3 (mt-co3) from Carassius auratus (Goldfish).